The following is a 166-amino-acid chain: Large ribosomal subunit protein eL14 (166 aa).

The interval 135–166 (KADGTPRVLKKDRRERLRAEKAKGGKKAAAKK) is disordered. Positions 146–157 (DRRERLRAEKAK) are enriched in basic and acidic residues.

This sequence belongs to the eukaryotic ribosomal protein eL14 family.

The chain is Large ribosomal subunit protein eL14 (RpL14) from Drosophila melanogaster (Fruit fly).